Here is a 182-residue protein sequence, read N- to C-terminus: Large ribosomal subunit protein uL6 (182 aa).

It belongs to the universal ribosomal protein uL6 family. As to quaternary structure, part of the 50S ribosomal subunit.

Its function is as follows. This protein binds to the 23S rRNA, and is important in its secondary structure. It is located near the subunit interface in the base of the L7/L12 stalk, and near the tRNA binding site of the peptidyltransferase center. The protein is Large ribosomal subunit protein uL6 of Pelotomaculum thermopropionicum (strain DSM 13744 / JCM 10971 / SI).